We begin with the raw amino-acid sequence, 513 residues long: Glutamate--tRNA ligase 2 (513 aa).

A 'HIGH' region motif is present at residues 11–21; the sequence is PSPTGFLHIGS. The short motif at 240–244 is the 'KMSKS' region element; that stretch reads KLSKR. ATP is bound at residue K243. Residues 335-383 form the RPE1 insert domain; sequence NTLLRHLPYREEFGGNTERSTAAYIDIREDASTGLTYKLPLAVELPKKF.

It belongs to the class-I aminoacyl-tRNA synthetase family. Glutamate--tRNA ligase type 1 subfamily. As to quaternary structure, monomer.

The protein localises to the cytoplasm. It catalyses the reaction tRNA(Glu) + L-glutamate + ATP = L-glutamyl-tRNA(Glu) + AMP + diphosphate. In terms of biological role, catalyzes the attachment of glutamate to tRNA(Glu) in a two-step reaction: glutamate is first activated by ATP to form Glu-AMP and then transferred to the acceptor end of tRNA(Glu). This Rickettsia conorii (strain ATCC VR-613 / Malish 7) protein is Glutamate--tRNA ligase 2.